Consider the following 483-residue polypeptide: Regulatory protein ViaA (483 aa).

Belongs to the ViaA family. As to quaternary structure, homodimer. Interacts with RavA.

The protein localises to the cytoplasm. In terms of biological role, component of the RavA-ViaA chaperone complex, which may act on the membrane to optimize the function of some of the respiratory chains. ViaA stimulates the ATPase activity of RavA. The polypeptide is Regulatory protein ViaA (Shigella flexneri).